Reading from the N-terminus, the 692-residue chain is Penicillin-binding protein activator LpoA (692 aa).

The signal sequence occupies residues 1-26 (MLSSITVRTKSGRLIPLVLAATLLAA). A lipid anchor (N-palmitoyl cysteine) is attached at Cys27. Cys27 is lipidated: S-diacylglycerol cysteine. Disordered regions lie at residues 297-316 (AAAA…AAAT) and 324-373 (VNAA…PDAH). A compositionally biased stretch (low complexity) spans 332 to 363 (PSAQGTDAAAPAAPNDSAALPPLDAAGDPIAP).

Belongs to the LpoA family. In terms of assembly, interacts with PBP1a.

It is found in the cell outer membrane. Functionally, regulator of peptidoglycan synthesis that is essential for the function of penicillin-binding protein 1A (PBP1a). In Edwardsiella piscicida, this protein is Penicillin-binding protein activator LpoA.